Consider the following 993-residue polypeptide: Receptor-type tyrosine-protein kinase FLT3 (993 aa).

An N-terminal signal peptide occupies residues 1-26 (MPALARDGGQLPLLVVFSAMIFGTIT). Residues 27 to 543 (NQDLPVIKCV…PFPFIQDNIS (517 aa)) are Extracellular-facing. An intrachain disulfide couples Cys35 to Cys65. 2 N-linked (GlcNAc...) asparagine glycosylation sites follow: Asn43 and Asn100. Cys103 and Cys114 are joined by a disulfide. Asn151 carries N-linked (GlcNAc...) asparagine glycosylation. Disulfide bonds link Cys199–Cys206, Cys232–Cys241, and Cys272–Cys330. In terms of domain architecture, Ig-like C2-type spans 253–343 (PQTTLPQLFL…KHPSQSALVT (91 aa)). N-linked (GlcNAc...) asparagine glycans are attached at residues Asn306, Asn323, Asn351, and Asn354. 2 cysteine pairs are disulfide-bonded: Cys368–Cys407 and Cys381–Cys392. 3 N-linked (GlcNAc...) asparagine glycosylation sites follow: Asn473, Asn502, and Asn541. The chain crosses the membrane as a helical span at residues 544-563 (FYATIGVCLLFIVVLTLLIC). At 564 to 993 (HKYKKQFRYE…LSPQAQVEDS (430 aa)) the chain is on the cytoplasmic side. Tyr572 carries the phosphotyrosine modification. Ser574 is modified (phosphoserine). Phosphotyrosine; by autocatalysis is present on residues Tyr589, Tyr591, and Tyr599. Positions 591-597 (YVDFREY) are important for normal regulation of the kinase activity and for maintaining the kinase in an inactive state in the absence of bound ligand. Residues 610 to 943 (LEFGKVLGSG…PSFPNLTSFL (334 aa)) form the Protein kinase domain. Residues 616 to 624 (LGSGAFGKV) and Lys644 contribute to the ATP site. Tyr726 bears the Phosphotyrosine; by autocatalysis mark. The residue at position 759 (Ser759) is a Phosphoserine. 2 positions are modified to phosphotyrosine: Tyr768 and Tyr793. Asp811 functions as the Proton acceptor in the catalytic mechanism. Tyr842, Tyr955, and Tyr969 each carry phosphotyrosine; by autocatalysis. A Phosphoserine modification is found at Ser993.

Belongs to the protein kinase superfamily. Tyr protein kinase family. CSF-1/PDGF receptor subfamily. As to quaternary structure, monomer in the absence of bound FLT3LG. Homodimer in the presence of bound FLT3LG. Interacts with FIZ1 following ligand activation. Interacts with FES, FER, LYN, FGR, HCK, SRC and GRB2. Interacts with PTPRJ/DEP-1 and PTPN11/SHP2. Interacts with RNF115 and RNF126. In terms of assembly, (Microbial infection) Interacts with human cytomegalovirus protein UL7. Post-translationally, N-glycosylated, contains complex N-glycans with sialic acid. In terms of processing, autophosphorylated on several tyrosine residues in response to FLT3LG binding. FLT3LG binding also increases phosphorylation of mutant kinases that are constitutively activated. Dephosphorylated by PTPRJ/DEP-1, PTPN1, PTPN6/SHP-1, and to a lesser degree by PTPN12. Dephosphorylation is important for export from the endoplasmic reticulum and location at the cell membrane. Rapidly ubiquitinated by UBE2L6 and the E3 ubiquitin-protein ligase SIAH1 after autophosphorylation, leading to its proteasomal degradation. In terms of tissue distribution, detected in bone marrow, in hematopoietic stem cells, in myeloid progenitor cells and in granulocyte/macrophage progenitor cells (at protein level). Detected in bone marrow, liver, thymus, spleen and lymph node, and at low levels in kidney and pancreas. Highly expressed in T-cell leukemia.

It localises to the membrane. The protein resides in the endoplasmic reticulum lumen. The catalysed reaction is L-tyrosyl-[protein] + ATP = O-phospho-L-tyrosyl-[protein] + ADP + H(+). Present in an inactive conformation in the absence of bound ligand. FLT3LG binding leads to dimerization and activation by autophosphorylation. Functionally, tyrosine-protein kinase that acts as a cell-surface receptor for the cytokine FLT3LG and regulates differentiation, proliferation and survival of hematopoietic progenitor cells and of dendritic cells. Promotes phosphorylation of SHC1 and AKT1, and activation of the downstream effector MTOR. Promotes activation of RAS signaling and phosphorylation of downstream kinases, including MAPK1/ERK2 and/or MAPK3/ERK1. Promotes phosphorylation of FES, FER, PTPN6/SHP, PTPN11/SHP-2, PLCG1, and STAT5A and/or STAT5B. Activation of wild-type FLT3 causes only marginal activation of STAT5A or STAT5B. Mutations that cause constitutive kinase activity promote cell proliferation and resistance to apoptosis via the activation of multiple signaling pathways. In Homo sapiens (Human), this protein is Receptor-type tyrosine-protein kinase FLT3 (FLT3).